Reading from the N-terminus, the 43-residue chain is Protein PsbN (43 aa).

The chain crosses the membrane as a helical span at residues 5-25 (TVLSIFISSLLLGITIYSIYI).

Belongs to the PsbN family.

Its subcellular location is the plastid. It is found in the chloroplast thylakoid membrane. Its function is as follows. May play a role in photosystem I and II biogenesis. The chain is Protein PsbN from Gracilaria tenuistipitata var. liui (Red alga).